A 259-amino-acid polypeptide reads, in one-letter code: Indole-3-glycerol phosphate synthase (259 aa).

It belongs to the TrpC family.

It catalyses the reaction 1-(2-carboxyphenylamino)-1-deoxy-D-ribulose 5-phosphate + H(+) = (1S,2R)-1-C-(indol-3-yl)glycerol 3-phosphate + CO2 + H2O. The protein operates within amino-acid biosynthesis; L-tryptophan biosynthesis; L-tryptophan from chorismate: step 4/5. The sequence is that of Indole-3-glycerol phosphate synthase from Dehalococcoides mccartyi (strain ATCC BAA-2100 / JCM 16839 / KCTC 5957 / BAV1).